The primary structure comprises 279 residues: Lectin 9 (279 aa).

The N-terminal stretch at 1-23 is a signal peptide; sequence MALSSALIKIFITFLFLQNHVNS. 4 N-linked (GlcNAc...) asparagine glycosylation sites follow: N116, N139, N235, and N272.

The protein belongs to the leguminous lectin family.

In terms of biological role, may be involved in arbuscular mycorrhizal (AM) symbiosis with AM fungi. The chain is Lectin 9 from Medicago truncatula (Barrel medic).